Consider the following 332-residue polypeptide: Beta-chimaerin (332 aa).

The Phorbol-ester/DAG-type zinc-finger motif lies at 78 to 128; it reads THNFKVHTFRGPHWCEYCANFMWGLIAQGVRCSDCGLNVHKQCSKHVPNDC. Residues 141-332 enclose the Rho-GAP domain; it reads CDLTTLVKAH…ILIENEDVLF (192 aa).

The protein resides in the membrane. Its activity is regulated as follows. In the inactive state, the N terminus protrudes into the active site of the Rho-GAP domain, sterically blocking Rac binding. Phospholipid binding to the Phorbol-ester/DAG-type zinc-finger/C1 domain triggers the cooperative dissociation of these interactions, allowing the N-terminus to move out of the active site and thereby activating the enzyme. In terms of biological role, GTPase-activating protein for p21-rac. This chain is Beta-chimaerin (Chn2), found in Mus musculus (Mouse).